The sequence spans 329 residues: Sorting assembly machinery 35 kDa subunit (329 aa).

In terms of assembly, component of the mitochondrial outer membrane sorting assembly machinery (SAM or TOB) complex, which at least consists of SAM35, SAM37 and SAM50.

Its subcellular location is the mitochondrion outer membrane. Essential component of the mitochondrial outer membrane sorting assembly machinery (SAM or TOB) complex, which is required for the sorting of proteins with complicated topology, such as beta-barrel proteins, to the mitochondrial outer membrane after import by the TOM complex. The chain is Sorting assembly machinery 35 kDa subunit (SAM35) from Saccharomyces cerevisiae (strain ATCC 204508 / S288c) (Baker's yeast).